The chain runs to 339 residues: Transcription initiation factor IIB (339 aa).

The TFIIB-type zinc-finger motif lies at 39-70 (EELICPVCGSKSIIKDYERAEIVCEMCGCVLQ). Positions 43, 46, 62, and 65 each coordinate Zn(2+). Tandem repeats lie at residues 156-239 (SELD…SREL) and 250-331 (DYVP…ELTE).

Belongs to the TFIIB family.

Stabilizes TBP binding to an archaeal box-A promoter. Also responsible for recruiting RNA polymerase II to the pre-initiation complex (DNA-TBP-TFIIB). This is Transcription initiation factor IIB from Methanococcus maripaludis (strain DSM 14266 / JCM 13030 / NBRC 101832 / S2 / LL).